The primary structure comprises 431 residues: Protein EARLY STARVATION 1, chloroplastic (431 aa).

Residues 1 to 19 constitute a chloroplast transit peptide; it reads MAACSRGLVARPFDLTARG. Disordered regions lie at residues 65-126 and 403-431; these read GNKP…DTGI and GVYPTIDFSASSPAPPSDDPPGMPPSPLE. Pro residues predominate over residues 415–431; it reads PAPPSDDPPGMPPSPLE.

It belongs to the ESV1 family.

It is found in the plastid. The protein localises to the chloroplast stroma. In terms of biological role, binds preferentially to highly ordered alpha-glucans, such as starch and crystalline maltodextrins. Involved in the organization of the starch granule matrix, thus influencing starch turnover by modulating the accessibility of starch polymers to modifying and degrading enzymes. Required for the control of starch degradation in leaves and starch distribution in nonphotosynthetic parts. Promotes gravitropic responses, negative in shoots but positive in roots, by facilitating starch granules (statoliths) formation in hypocotyls and roots columella. Facilitates tight packing of starch granules in grains. The chain is Protein EARLY STARVATION 1, chloroplastic from Oryza sativa subsp. indica (Rice).